We begin with the raw amino-acid sequence, 719 residues long: T-cell immunomodulatory protein homolog (719 aa).

The N-terminal stretch at 1–32 (MYNFLSCKKKSIILQVLLIICTYNILLNFVNI) is a signal peptide. Topologically, residues 33–677 (FVNNNEKNHK…LSVNPSKKFY (645 aa)) are extracellular. 5 N-linked (GlcNAc...) asparagine glycosylation sites follow: N144, N277, N410, N540, and N659. The chain crosses the membrane as a helical span at residues 678–697 (SILYITLICLSVIGVLIFIL). Topologically, residues 698–719 (DRKEKVEDSKEELGFKSHFVIG) are cytoplasmic.

This sequence belongs to the TIP family.

It localises to the membrane. Its function is as follows. May protect the parasite against attack by the host immune system by immunomodulation. The protein is T-cell immunomodulatory protein homolog of Plasmodium falciparum (isolate 3D7).